The following is a 243-amino-acid chain: Max-interacting protein 1 (243 aa).

The bHLH domain occupies 76-128; it reads HYRSTHNELEKNRRAHLRLCLERLKTLIPLGPECSRHTTLGLLNKAKAHIKKL. A disordered region spans residues 164–235; that stretch reads EAERIRTDSM…TASDEGYSSC (72 aa). The span at 188–198 shows a compositional bias: acidic residues; the sequence is DQEEMEVDVES. The segment covering 222 to 235 has biased composition (polar residues); the sequence is SLQSTASDEGYSSC.

In terms of assembly, efficient DNA binding requires dimerization with another bHLH protein. Binds DNA as a heterodimer with MAX.

The protein localises to the nucleus. Functionally, transcriptional repressor. MXI1 binds with MAX to form a sequence-specific DNA-binding protein complex which recognizes the core sequence 5'-CAC[GA]TG-3'. MXI1 thus antagonizes MYC transcriptional activity by competing for MAX. This Danio rerio (Zebrafish) protein is Max-interacting protein 1 (mxi1).